The primary structure comprises 557 residues: Urocanate hydratase (557 aa).

Residues 1-20 (MSNPRHNEREVRSPRGDELN) form a disordered region. Residues 52-53 (GG), Gln130, 176-178 (GMG), Glu196, Arg201, 242-243 (NA), 263-267 (QTSAH), 273-274 (YL), and Tyr322 contribute to the NAD(+) site. Cys410 is an active-site residue. Gly492 is a binding site for NAD(+).

The protein belongs to the urocanase family. Requires NAD(+) as cofactor.

It is found in the cytoplasm. The catalysed reaction is 4-imidazolone-5-propanoate = trans-urocanate + H2O. Its pathway is amino-acid degradation; L-histidine degradation into L-glutamate; N-formimidoyl-L-glutamate from L-histidine: step 2/3. Catalyzes the conversion of urocanate to 4-imidazolone-5-propionate. This is Urocanate hydratase from Brucella ovis (strain ATCC 25840 / 63/290 / NCTC 10512).